Consider the following 150-residue polypeptide: Ribosomal RNA large subunit methyltransferase H (150 aa).

S-adenosyl-L-methionine-binding positions include Ile71, Ala100, and Leu118–Phe123.

It belongs to the RNA methyltransferase RlmH family. Homodimer.

The protein resides in the cytoplasm. It catalyses the reaction pseudouridine(1915) in 23S rRNA + S-adenosyl-L-methionine = N(3)-methylpseudouridine(1915) in 23S rRNA + S-adenosyl-L-homocysteine + H(+). Functionally, specifically methylates the pseudouridine at position 1915 (m3Psi1915) in 23S rRNA. This is Ribosomal RNA large subunit methyltransferase H from Helicobacter acinonychis (strain Sheeba).